The primary structure comprises 145 residues: NADH-quinone oxidoreductase subunit A (145 aa).

3 consecutive transmembrane segments (helical) span residues 14–34 (FAVF…GGFL), 66–86 (FYLV…LYAW), and 96–116 (VGFI…VYLV).

Belongs to the complex I subunit 3 family. In terms of assembly, NDH-1 is composed of 13 different subunits. Subunits NuoA, H, J, K, L, M, N constitute the membrane sector of the complex.

Its subcellular location is the cell inner membrane. It catalyses the reaction a quinone + NADH + 5 H(+)(in) = a quinol + NAD(+) + 4 H(+)(out). In terms of biological role, NDH-1 shuttles electrons from NADH, via FMN and iron-sulfur (Fe-S) centers, to quinones in the respiratory chain. The immediate electron acceptor for the enzyme in this species is believed to be ubiquinone. Couples the redox reaction to proton translocation (for every two electrons transferred, four hydrogen ions are translocated across the cytoplasmic membrane), and thus conserves the redox energy in a proton gradient. This Sodalis glossinidius (strain morsitans) protein is NADH-quinone oxidoreductase subunit A.